Consider the following 402-residue polypeptide: Acyl-[acyl-carrier-protein] desaturase 3, chloroplastic (402 aa).

A chloroplast-targeting transit peptide spans 1 to 32; it reads MSLTGCLPPRPPCSMRRRTSGGGASVSPVVAM. A disordered region spans residues 1 to 66; the sequence is MSLTGCLPPR…EVPPQVTHTL (66 aa). Fe cation-binding residues include Glu-139, Glu-178, His-181, Glu-231, Glu-264, and His-267.

The protein belongs to the fatty acid desaturase type 2 family. As to quaternary structure, homodimer. Fe(2+) is required as a cofactor.

It is found in the plastid. It localises to the chloroplast. The protein operates within lipid metabolism; fatty acid metabolism. Introduces a cis double bond in the acyl chain of an acyl-[acyl-carrier protein]. The protein is Acyl-[acyl-carrier-protein] desaturase 3, chloroplastic of Oryza sativa subsp. japonica (Rice).